Here is a 282-residue protein sequence, read N- to C-terminus: Benzoyl-CoA reductase subunit D (282 aa).

Residues Cys-130 and Cys-169 each contribute to the [4Fe-4S] cluster site.

Heterotetramer composed of A, B, C, and D subunits. It depends on [4Fe-4S] cluster as a cofactor.

It catalyses the reaction cyclohexa-1,5-diene-1-carbonyl-CoA + oxidized 2[4Fe-4S]-[ferredoxin] + 2 ADP + 2 phosphate = reduced 2[4Fe-4S]-[ferredoxin] + benzoyl-CoA + 2 ATP + 2 H2O. The enzyme catalyses 3-hydroxybenzoyl-CoA + AH2 + 2 ATP + 2 H2O = 3-hydroxycyclohexa-1,5-diene-1-carbonyl-CoA + A + 2 ADP + 2 phosphate + 2 H(+). Its function is as follows. Catalyzes the anaerobic reduction of benzoyl-CoA and 3-hydroxybenzoyl-CoA to form cyclohexa-1,5-diene-1-carbonyl-CoA and 3-hydroxycyclohexa-1,5-diene-1-carbonyl-CoA, respectively. The enzyme also reduces other benzoyl-CoA analogs with small substituents at the aromatic ring. The chain is Benzoyl-CoA reductase subunit D (bcrD) from Thauera aromatica.